The primary structure comprises 602 residues: Beta-(1--&gt;2)glucan export ATP-binding/permease protein NdvA (602 aa).

Positions 21 to 311 (GWTLAVANLL…VVSFVNSLMM (291 aa)) constitute an ABC transmembrane type-1 domain. Transmembrane regions (helical) follow at residues 22 to 42 (WTLA…PVLF), 68 to 88 (LLAA…TVAL), 146 to 166 (EHFA…YINW), 167 to 187 (RLAI…TLVV), 254 to 274 (VITR…GIAL), and 276 to 296 (QQGL…TLLI). The 235-residue stretch at 345 to 579 (VEFLDVSFSY…RGRFAELARA (235 aa)) folds into the ABC transporter domain. 378-385 (GATGAGKS) is an ATP binding site.

This sequence belongs to the ABC transporter superfamily. Beta-(1--&gt;2)glucan exporter (TC 3.A.1.108.1) family. Homodimer.

Its subcellular location is the cell inner membrane. It carries out the reaction [(1-&gt;2)-beta-D-glucosyl](n)(in) + ATP + H2O = [(1-&gt;2)-beta-D-glucosyl](n)(out) + ADP + phosphate + H(+). Functionally, involved in beta-(1--&gt;2)glucan export. Transmembrane domains (TMD) form a pore in the inner membrane and the ATP-binding domain (NBD) is responsible for energy generation. This is Beta-(1--&gt;2)glucan export ATP-binding/permease protein NdvA from Rhodopseudomonas palustris (strain BisB5).